The primary structure comprises 355 residues: Holliday junction branch migration complex subunit RuvB (355 aa).

Positions 1–193 are large ATPase domain (RuvB-L); it reads MGRFSEDSAD…FGFTAHMDFY (193 aa). Residues Leu-32, Arg-33, Gly-74, Lys-77, Thr-78, Ser-79, 140 to 142, Arg-183, Tyr-193, and Arg-230 each bind ATP; that span reads EDF. A Mg(2+)-binding site is contributed by Thr-78. The small ATPAse domain (RuvB-S) stretch occupies residues 194–264; sequence EPSELERVLA…IAKYALEVYD (71 aa). A head domain (RuvB-H) region spans residues 267 to 355; it reads ELGLDRLDRA…VGLGQTGLFD (89 aa). The DNA site is built by Arg-322 and Arg-327.

Belongs to the RuvB family. In terms of assembly, homohexamer. Forms an RuvA(8)-RuvB(12)-Holliday junction (HJ) complex. HJ DNA is sandwiched between 2 RuvA tetramers; dsDNA enters through RuvA and exits via RuvB. An RuvB hexamer assembles on each DNA strand where it exits the tetramer. Each RuvB hexamer is contacted by two RuvA subunits (via domain III) on 2 adjacent RuvB subunits; this complex drives branch migration. In the full resolvosome a probable DNA-RuvA(4)-RuvB(12)-RuvC(2) complex forms which resolves the HJ.

It is found in the cytoplasm. The enzyme catalyses ATP + H2O = ADP + phosphate + H(+). In terms of biological role, the RuvA-RuvB-RuvC complex processes Holliday junction (HJ) DNA during genetic recombination and DNA repair, while the RuvA-RuvB complex plays an important role in the rescue of blocked DNA replication forks via replication fork reversal (RFR). RuvA specifically binds to HJ cruciform DNA, conferring on it an open structure. The RuvB hexamer acts as an ATP-dependent pump, pulling dsDNA into and through the RuvAB complex. RuvB forms 2 homohexamers on either side of HJ DNA bound by 1 or 2 RuvA tetramers; 4 subunits per hexamer contact DNA at a time. Coordinated motions by a converter formed by DNA-disengaged RuvB subunits stimulates ATP hydrolysis and nucleotide exchange. Immobilization of the converter enables RuvB to convert the ATP-contained energy into a lever motion, pulling 2 nucleotides of DNA out of the RuvA tetramer per ATP hydrolyzed, thus driving DNA branch migration. The RuvB motors rotate together with the DNA substrate, which together with the progressing nucleotide cycle form the mechanistic basis for DNA recombination by continuous HJ branch migration. Branch migration allows RuvC to scan DNA until it finds its consensus sequence, where it cleaves and resolves cruciform DNA. This is Holliday junction branch migration complex subunit RuvB from Mycolicibacterium vanbaalenii (strain DSM 7251 / JCM 13017 / BCRC 16820 / KCTC 9966 / NRRL B-24157 / PYR-1) (Mycobacterium vanbaalenii).